Here is a 559-residue protein sequence, read N- to C-terminus: Potassium-transporting ATPase potassium-binding subunit (559 aa).

The next 13 membrane-spanning stretches (helical) occupy residues 5 to 25, 27 to 47, 63 to 83, 132 to 152, 170 to 190, 253 to 273, 283 to 303, 327 to 347, 356 to 376, 379 to 399, 416 to 436, 484 to 504, and 524 to 544; these read GFLL…PLGS, LARL…RILW, LLAL…LLFW, GLTV…FALI, LVRI…LFFI, LAQM…FGEA, LLWA…WAEV, FGVL…CGAV, ALGG…FGGV, GLYG…LMIG, MTAL…ALAM, LLAF…MAIA, and GALF…LTFI.

Belongs to the KdpA family. As to quaternary structure, the system is composed of three essential subunits: KdpA, KdpB and KdpC.

The protein localises to the cell inner membrane. Functionally, part of the high-affinity ATP-driven potassium transport (or Kdp) system, which catalyzes the hydrolysis of ATP coupled with the electrogenic transport of potassium into the cytoplasm. This subunit binds the periplasmic potassium ions and delivers the ions to the membrane domain of KdpB through an intramembrane tunnel. This Salmonella enteritidis PT4 (strain P125109) protein is Potassium-transporting ATPase potassium-binding subunit.